A 991-amino-acid chain; its full sequence is Transcription factor ROB1 (991 aa).

The segment at residues 17–43 (CTVCRTIKRKCDGNTPCSNCLKRNQEC) is a DNA-binding region (zn(2)-C6 fungal-type). Disordered stretches follow at residues 150 to 188 (LNQQQQQQQPSPQSLSQSSASEVSTRSSPASPNSTISLA), 792 to 875 (FYAQ…EDNP), and 901 to 959 (QEEG…PQLP). Positions 152-168 (QQQQQQQPSPQSLSQSS) are enriched in low complexity. Residues 169 to 187 (ASEVSTRSSPASPNSTISL) show a composition bias toward polar residues. Positions 795–806 (QQQQQQQQQQQQ) are enriched in low complexity. 2 stretches are compositionally biased toward basic and acidic residues: residues 807–817 (PKHEYHDHQQE) and 825–855 (QEEHSEKDIKIEIKDEPQPQEEHIHQDYPMK). Residues 907–931 (QQQQQQQQEQVQQEQVQQEQVQQDQ) are compositionally biased toward low complexity.

The protein localises to the nucleus. In terms of biological role, transcription factor that mediates conventional biofilm formation and plays a key role in microcolony formation under both flow and static conditions and to epithelial surfaces. Modulates infection of mammalian hosts. The polypeptide is Transcription factor ROB1 (Candida albicans (strain SC5314 / ATCC MYA-2876) (Yeast)).